The sequence spans 313 residues: Biotin synthase (313 aa).

The 231-residue stretch at 28–258 (NFGNDIELCS…LFPQARLRLS (231 aa)) folds into the Radical SAM core domain. [4Fe-4S] cluster contacts are provided by Cys46, Cys50, and Cys53. Residues Cys90, Cys121, Cys181, and Arg256 each coordinate [2Fe-2S] cluster.

Belongs to the radical SAM superfamily. Biotin synthase family. Homodimer. The cofactor is [4Fe-4S] cluster. Requires [2Fe-2S] cluster as cofactor.

It carries out the reaction (4R,5S)-dethiobiotin + (sulfur carrier)-SH + 2 reduced [2Fe-2S]-[ferredoxin] + 2 S-adenosyl-L-methionine = (sulfur carrier)-H + biotin + 2 5'-deoxyadenosine + 2 L-methionine + 2 oxidized [2Fe-2S]-[ferredoxin]. It functions in the pathway cofactor biosynthesis; biotin biosynthesis; biotin from 7,8-diaminononanoate: step 2/2. Functionally, catalyzes the conversion of dethiobiotin (DTB) to biotin by the insertion of a sulfur atom into dethiobiotin via a radical-based mechanism. The chain is Biotin synthase from Francisella tularensis subsp. tularensis (strain FSC 198).